Consider the following 338-residue polypeptide: tRNA N6-adenosine threonylcarbamoyltransferase (338 aa).

Residues histidine 111 and histidine 115 each contribute to the Fe cation site. Substrate is bound by residues 134-138, aspartate 167, glycine 180, and asparagine 272; that span reads LVSGG. A Fe cation-binding site is contributed by aspartate 300.

The protein belongs to the KAE1 / TsaD family. The cofactor is Fe(2+).

Its subcellular location is the cytoplasm. It catalyses the reaction L-threonylcarbamoyladenylate + adenosine(37) in tRNA = N(6)-L-threonylcarbamoyladenosine(37) in tRNA + AMP + H(+). Its function is as follows. Required for the formation of a threonylcarbamoyl group on adenosine at position 37 (t(6)A37) in tRNAs that read codons beginning with adenine. Is involved in the transfer of the threonylcarbamoyl moiety of threonylcarbamoyl-AMP (TC-AMP) to the N6 group of A37, together with TsaE and TsaB. TsaD likely plays a direct catalytic role in this reaction. The chain is tRNA N6-adenosine threonylcarbamoyltransferase from Vibrio atlanticus (strain LGP32) (Vibrio splendidus (strain Mel32)).